Here is a 166-residue protein sequence, read N- to C-terminus: Putative tRNA (cytidine(34)-2'-O)-methyltransferase (166 aa).

Residues L83, G109, I130, and S138 each coordinate S-adenosyl-L-methionine.

It belongs to the class IV-like SAM-binding methyltransferase superfamily. RNA methyltransferase TrmH family. TrmL subfamily.

Its subcellular location is the cytoplasm. The enzyme catalyses cytidine(34) in tRNA + S-adenosyl-L-methionine = 2'-O-methylcytidine(34) in tRNA + S-adenosyl-L-homocysteine + H(+). It catalyses the reaction 5-carboxymethylaminomethyluridine(34) in tRNA(Leu) + S-adenosyl-L-methionine = 5-carboxymethylaminomethyl-2'-O-methyluridine(34) in tRNA(Leu) + S-adenosyl-L-homocysteine + H(+). In terms of biological role, could methylate the ribose at the nucleotide 34 wobble position in tRNA. The protein is Putative tRNA (cytidine(34)-2'-O)-methyltransferase of Mycoplasma pneumoniae (strain ATCC 29342 / M129 / Subtype 1) (Mycoplasmoides pneumoniae).